The following is a 328-amino-acid chain: uncharacterized protein (328 aa).

At Ser170 the chain carries Phosphoserine.

It is found in the cytoplasm. The protein localises to the nucleus. This is an uncharacterized protein from Schizosaccharomyces pombe (strain 972 / ATCC 24843) (Fission yeast).